The primary structure comprises 504 residues: Maturase K (504 aa).

This sequence belongs to the intron maturase 2 family. MatK subfamily.

The protein resides in the plastid. Its subcellular location is the chloroplast. Its function is as follows. Usually encoded in the trnK tRNA gene intron. Probably assists in splicing its own and other chloroplast group II introns. The polypeptide is Maturase K (Hamamelis japonica (Japanese witch hazel)).